Consider the following 334-residue polypeptide: Probable tRNA pseudouridine synthase B (334 aa).

Asp82 (nucleophile) is an active-site residue. The 76-residue stretch at Leu250 to Met325 folds into the PUA domain.

This sequence belongs to the pseudouridine synthase TruB family. Type 2 subfamily.

It catalyses the reaction uridine(55) in tRNA = pseudouridine(55) in tRNA. Its function is as follows. Could be responsible for synthesis of pseudouridine from uracil-55 in the psi GC loop of transfer RNAs. The chain is Probable tRNA pseudouridine synthase B from Pyrococcus horikoshii (strain ATCC 700860 / DSM 12428 / JCM 9974 / NBRC 100139 / OT-3).